We begin with the raw amino-acid sequence, 254 residues long: Chalcone isomerase cfoK (254 aa).

Residues H33 and Y50 contribute to the active site.

It catalyses the reaction a chalcone = a flavanone.. The protein operates within secondary metabolite biosynthesis; flavonoid biosynthesis. Functionally, chalcone isomerase; part of the gene cluster that mediates the biosynthesis of chlorflavonin, a fungal flavonoid with acetolactate synthase inhibitory activity. Within the pathway, cfoK acts as chalcone isomerase (CHI), the key enzyme responsible for the tricyclic formation of flavanone through Michael-type intramolecular cyclization of chalcone. The hydrogen at C2'-OH is extracted by the imidazole ring of His-33, which induces the oxa-Michael addition to form the intermediate enolate through 6-endo-trig mode cyclization. The enolate can then be stabilized by a hydrogen bond with the Tyr-50 residue. Following enol tautomerization, the C ring, a gamma-pyranone ring, is formed. The pathway begins with the PKS-NRPS hybrid synthetase cfoA that uses benzoic acid or p-hydroxybenzoic acid as a starter unit with four rounds of chain elongation using malonyl-CoA to form the chalcone skeleton. Then, a new type of chalcone isomerase, cfoK, catalyzes the conversion of the chalcone into a flavanone by a histidine-mediated oxa-Michael addition mechanism. The desaturation of flavanone to flavone is catalyzed by a new type of flavone synthase, the flavin mononucleotide (FMN)-dependent oxidoreductase cfoJ. Monooxygenases cfoF, cfoG, and P450 cfoH are responsible for the hydroxylation of the flavonoid skeleton at sites C3, C8, and C2', respectively. Like cfoF, the dehydratase cfoI plays also a role in the hydroxylation of position C3. Methyltransferases cfoB, cfoC, and cfoD then catalyze the methylation of C7-OH, C8-OH, and C3-OH, respectively. Finally, the monooxygenase cfoE is responsible for the chlorination of flavonoid at position C3'. The protein is Chalcone isomerase cfoK of Aspergillus candidus.